A 2159-amino-acid polypeptide reads, in one-letter code: Calpain-type cysteine protease DEK1 (2159 aa).

The signal sequence occupies residues 1–33 (MEGEGHHGVVLACSICGFLFAVLSPFSFWVLWA). Residues 34 to 70 (VNWRPWRLYSWIYARKWPTYVQGPQLSTLCSLLTLCA) lie on the Extracellular side of the membrane. A helical membrane pass occupies residues 71–91 (WLVVISPIAVLLVWGSVLIAL). Topologically, residues 92–95 (MERN) are cytoplasmic. The helical transmembrane segment at 96–116 (IIGLAVIMAGVALLLSFYSIM) threads the bilayer. The Extracellular segment spans residues 117–127 (LWWRTQWQSSE). The helical transmembrane segment at 128 to 148 (AVAYLLLLAVCLLCAYDFCAI) threads the bilayer. Residues 149 to 164 (YVTAGASASELNSPSG) lie on the Cytoplasmic side of the membrane. The helical transmembrane segment at 165-185 (FFFGVSVISLAINMLFICKIL) threads the bilayer. The Extracellular segment spans residues 186-236 (FNVSGFDVDEYVRRSYKFAYSDCVEVAPVSCSPEPPDPSELYMTKSSRVKH). The helical transmembrane segment at 237-257 (LGLLYISSLLVLVGYSILYGL) threads the bilayer. Topologically, residues 258–264 (TSKEARW) are cytoplasmic. Residues 265-285 (LGALTSVAVVILDWNLGLCSF) form a helical membrane-spanning segment. The Extracellular portion of the chain corresponds to 286–294 (RFELLKSRM). A helical transmembrane segment spans residues 295 to 315 (IVLFVAGTSRAFLVSFGVHYW). Over 316 to 320 (YLGHC) the chain is Cytoplasmic. A helical membrane pass occupies residues 321-341 (ISYAFVASVLLSAAVSSWLSI). Topologically, residues 342-623 (SNPSVARIDA…LIFHHLAGSP (282 aa)) are extracellular. Residues 365–409 (RKGQNSSSNSSEGCGSSVKRSSGSVEAGQNGNAMDSMYRSNSQSD) are disordered. The segment covering 369 to 381 (NSSSNSSEGCGSS) has biased composition (low complexity). The segment covering 382 to 409 (VKRSSGSVEAGQNGNAMDSMYRSNSQSD) has biased composition (polar residues). The chain crosses the membrane as a helical span at residues 624–644 (IRAFIVFTVMFIIETATVAIY). Topologically, residues 645-660 (RPETIKVINATHEQFE) are cytoplasmic. A helical membrane pass occupies residues 661–681 (FGFSILLLSPVVCSIMAFIWS). Topologically, residues 682–694 (LRAEEMLMTSKPQ) are extracellular. A helical membrane pass occupies residues 695 to 715 (KYGFIAWLLSTCVGLFLSFLS). Residues 716–719 (KSSV) lie on the Cytoplasmic side of the membrane. The chain crosses the membrane as a helical span at residues 720–740 (ILGLSLTVPLMVACLSFAVPI). Topologically, residues 741–770 (WIRNGYSFWIPGREFANRENVSQAPGEKER) are extracellular. The helical transmembrane segment at 771-791 (ALFVITIAVFTASIIGLGAIV) threads the bilayer. The Cytoplasmic portion of the chain corresponds to 792-822 (SAKPLDALGYKGWDADKNSSYSPYATSMYLG). A helical transmembrane segment spans residues 823-843 (WALSSTIAVITTGLIPIVAWF). Residues 844–853 (ATYRFSPSSA) are Extracellular-facing. A helical membrane pass occupies residues 854–874 (ICVGLFATVLVSFCGASYWGV). The Cytoplasmic portion of the chain corresponds to 875–887 (VNSREDGVPLKAD). The helical transmembrane segment at 888–908 (FLAALLPLLCIPAFFSLFTGL) threads the bilayer. Residues 909 to 921 (YKWKDDDWKISRG) are Extracellular-facing. A helical membrane pass occupies residues 922 to 942 (VYLFVGMGMLLLFGAVAAVIV). Residues 943–946 (TIRP) lie on the Cytoplasmic side of the membrane. Residues 947–967 (WTVGVACLVAILFLVFVIGVI) form a helical membrane-spanning segment. Topologically, residues 968-981 (HYWTSNNFYLTRTQ) are extracellular. Residues 982–1002 (MLLVCSIAFLLALAAFLMGLF) form a helical membrane-spanning segment. Over 1003-1016 (HGKPFVGASIGYFS) the chain is Cytoplasmic. A helical transmembrane segment spans residues 1017–1037 (FIFLLTGRALTVLLSPPIVVY). Residues 1038 to 1060 (SPRVLPVYVYDAHADSAKNVSYA) are Extracellular-facing. Residues 1061 to 1081 (FLILYGIALATEVWGVIASLI) traverse the membrane as a helical segment. Residues 1082–2159 (MNPPFVGAGV…SKASIRLEAV (1078 aa)) are Cytoplasmic-facing. 2 positions are modified to phosphoserine: S1371 and S1376. The Calpain catalytic 1 domain occupies 1417–1609 (TGRHCGELDL…MSPAEYGFFD (193 aa)). S1665 is modified (phosphoserine). The Calpain catalytic 2 domain occupies 1703–2005 (NFTDQEFPPE…FRSIYVCRVY (303 aa)). Active-site residues include C1769, H1927, and N1947.

Belongs to the peptidase C2 family. Post-translationally, autocatalytic proteolytic cleavage leading to the production of mainly cytoplasmic localized subproducts of about 85 and 120 kDa. Expressed in most tissues at low levels ranging from 30 to 55 ppm. Present in all endosperm cells at transcript level, but confined to aleurones at protein level.

The protein localises to the endoplasmic reticulum membrane. It localises to the cytoplasm. It is found in the cell membrane. The protein resides in the endosome membrane. Its function is as follows. Essential protease involved in epiderm development. Required for aleurone cell development in the endosperm probably by maintaining and restricting the aleurone and embryonic epidermal L1 cell-layer fates as well as meristems organization. Involved in the maintenance of adaxial/abaxial axis information in developing leaves, probably by regulating cell proliferation and expansion. Does not need calcium ions to be active. In Zea mays (Maize), this protein is Calpain-type cysteine protease DEK1 (DEK1).